Here is an 82-residue protein sequence, read N- to C-terminus: uncharacterized protein (82 aa).

Its function is as follows. Could be a silencing control element for the regulation of the restriction system. This is an uncharacterized protein from Herpetosiphon aurantiacus (Herpetosiphon giganteus).